The following is a 120-amino-acid chain: Small ribosomal subunit protein bS16 (120 aa).

The tract at residues 81 to 120 (GLAKRPARNNPQKAEPGEKAKERAAKRAEKAAAPAEDAAA) is disordered. The span at 95–110 (EPGEKAKERAAKRAEK) shows a compositional bias: basic and acidic residues. Over residues 111–120 (AAAPAEDAAA) the composition is skewed to low complexity.

Belongs to the bacterial ribosomal protein bS16 family.

In Methylobacterium radiotolerans (strain ATCC 27329 / DSM 1819 / JCM 2831 / NBRC 15690 / NCIMB 10815 / 0-1), this protein is Small ribosomal subunit protein bS16.